Consider the following 403-residue polypeptide: Glycerophosphocholine acyltransferase 1 (403 aa).

At 1-112 (MDHLEFDENT…SGKVVRFRDK (112 aa)) the chain is on the cytoplasmic side. The chain crosses the membrane as a helical span at residues 113 to 133 (LSFALGVSTCILTALLVGMAP). Over 134–137 (ESMH) the chain is Lumenal. A helical membrane pass occupies residues 138–155 (LWYTIQLFVYLPLRYYTY). At 156–161 (QRKGYE) the chain is on the cytoplasmic side. The helical transmembrane segment at 162-182 (YFIADFCYWGNILLLVYIWIF) threads the bilayer. Residues 183–186 (PESR) are Lumenal-facing. The chain crosses the membrane as a helical span at residues 187 to 207 (RLFILSYSISYGTLAWSVVAW). The Cytoplasmic segment spans residues 208-218 (RNSLLFHSIDK). The chain crosses the membrane as a helical span at residues 219–239 (ITSLFIHFFPPLVLHTIVHLT). N-linked (GlcNAc...) asparagine glycosylation occurs at asparagine 240. The Lumenal portion of the chain corresponds to 240–262 (NKSYLKDRFPAVLKVKKIDLLSS). Residues 263–283 (VEIASFFYALWQIWYYFFIQV) traverse the membrane as a helical segment. Residues 284-322 (GKQKQIQEGRPTSFTWLSKAYSKTKLGRAVAKLPQNLQP) lie on the Cytoplasmic side of the membrane. A helical transmembrane segment spans residues 323–343 (FVFMIIQYLYSITTMLPCSLW). Residues 344–352 (YNNKLYSTA) lie on the Lumenal side of the membrane. A helical membrane pass occupies residues 353 to 373 (FLALIFGWSVWNGASYYIDVF). Residues 374 to 403 (GRRFQKELEALRQQLAETPTNSGSSSALSR) lie on the Cytoplasmic side of the membrane.

The protein belongs to the GPC1 family.

It localises to the endoplasmic reticulum membrane. The protein localises to the golgi apparatus membrane. It catalyses the reaction sn-glycerol 3-phosphocholine + an acyl-CoA = a 1-acyl-sn-glycero-3-phosphocholine + CoA. It carries out the reaction sn-glycero-3-phosphoethanolamine + an acyl-CoA = a monoacyl-sn-glycero-3-phosphoethanolamine + CoA. The catalysed reaction is sn-glycero-3-phosphoethanolamine + (9Z)-octadecenoyl-CoA = (9Z-octadecenoyl)-sn-glycero-3-phosphoethanolamine + CoA. Glycerophosphocholine acyltransferase (GPCAT) that utilizes acyl-CoA to acylate glycero-3-phosphocholine (GPC), forming lysophosphatidylcholine (LPC). Shows broad acyl specificities with a preference for 16:0-CoA, polyunsaturated acyl-CoA, and the hydroxylated ricinoleoyl-CoA. Also catalyzes the acylation of glycero-3-phosphoethanolamine (GPE) with acyl-CoA. In addition to acyl-CoA, GPCAT efficiently utilizes LPC and lysophosphatidylethanolamine (LPE) as acyl donors in the acylation of GPC. Contributes to the maintenance of phosphatidylcholine (PC) homeostasis and might also have specific functions in acyl editing of PC, such as transferring acyl groups modified at the sn-2 position of PC to the sn-1. The protein is Glycerophosphocholine acyltransferase 1 of Schizosaccharomyces pombe (strain 972 / ATCC 24843) (Fission yeast).